The following is a 248-amino-acid chain: Deoxyribose-phosphate aldolase (248 aa).

Residue aspartate 117 is the Proton donor/acceptor of the active site. Lysine 179 (schiff-base intermediate with acetaldehyde) is an active-site residue. Lysine 208 acts as the Proton donor/acceptor in catalysis.

Belongs to the DeoC/FbaB aldolase family. DeoC type 1 subfamily.

The protein localises to the cytoplasm. The enzyme catalyses 2-deoxy-D-ribose 5-phosphate = D-glyceraldehyde 3-phosphate + acetaldehyde. The protein operates within carbohydrate degradation; 2-deoxy-D-ribose 1-phosphate degradation; D-glyceraldehyde 3-phosphate and acetaldehyde from 2-deoxy-alpha-D-ribose 1-phosphate: step 2/2. In terms of biological role, catalyzes a reversible aldol reaction between acetaldehyde and D-glyceraldehyde 3-phosphate to generate 2-deoxy-D-ribose 5-phosphate. The chain is Deoxyribose-phosphate aldolase from Thermotoga maritima (strain ATCC 43589 / DSM 3109 / JCM 10099 / NBRC 100826 / MSB8).